A 460-amino-acid chain; its full sequence is 5-hydroxytryptamine receptor 2C (460 aa).

Residues M1 to A32 form the signal peptide. At I33–W56 the chain is on the extracellular side. Residues P57–M81 traverse the membrane as a helical segment. Over E82–N87 the chain is Cytoplasmic. The chain crosses the membrane as a helical span at residues A88–L112. The Extracellular portion of the chain corresponds to L113–P129. A disulfide bridge connects residues C128 and C208. Residues V130–D152 form a helical membrane-spanning segment. T140 serves as a coordination point for ergotamine. The DRY motif; important for ligand-induced conformation changes motif lies at D152–Y154. The Cytoplasmic segment spans residues R153–S168. A helical transmembrane segment spans residues R169 to I190. Residues P191 to N214 are Extracellular-facing. N204 and N205 each carry an N-linked (GlcNAc...) asparagine glycan. L210 provides a ligand contact to ergotamine. The helical transmembrane segment at F215–L237 threads the bilayer. Over T238 to K313 the chain is Cytoplasmic. The disordered stretch occupies residues E276–T301. Over residues P289 to R299 the composition is skewed to basic residues. The helical transmembrane segment at V314–L338 threads the bilayer. C339 and C343 form a disulfide bridge. Residues C339–E349 are Extracellular-facing. Residues K350–L372 traverse the membrane as a helical segment. An NPxxY motif; important for ligand-induced conformation changes and signaling motif is present at residues N366–Y370. At F373 to V460 the chain is on the cytoplasmic side. Residues S458 to V460 carry the PDZ-binding motif.

This sequence belongs to the G-protein coupled receptor 1 family. As to quaternary structure, interacts with MPDZ. Interacts with ARRB2. Interacts with MPP3; this interaction stabilizes the receptor at the plasma membrane and prevents the desensitization of the HTR2C receptor-mediated calcium response.

It localises to the cell membrane. In terms of biological role, G-protein coupled receptor for 5-hydroxytryptamine (serotonin). Also functions as a receptor for various drugs and psychoactive substances, including ergot alkaloid derivatives, 1-2,5,-dimethoxy-4-iodophenyl-2-aminopropane (DOI) and lysergic acid diethylamide (LSD). Ligand binding causes a conformation change that triggers signaling via guanine nucleotide-binding proteins (G proteins) and modulates the activity of downstream effectors. HTR2C is coupled to G(q)/G(11) G alpha proteins and activates phospholipase C-beta, releasing diacylglycerol (DAG) and inositol 1,4,5-trisphosphate (IP3) second messengers that modulate the activity of phosphatidylinositol 3-kinase and promote the release of Ca(2+) ions from intracellular stores, respectively. Beta-arrestin family members inhibit signaling via G proteins and mediate activation of alternative signaling pathways. Regulates neuronal activity via the activation of short transient receptor potential calcium channels in the brain, and thereby modulates the activation of pro-opiomelanocortin neurons and the release of CRH that then regulates the release of corticosterone. Plays a role in the regulation of appetite and eating behavior, responses to anxiogenic stimuli and stress. Plays a role in insulin sensitivity and glucose homeostasis. This chain is 5-hydroxytryptamine receptor 2C, found in Rattus norvegicus (Rat).